We begin with the raw amino-acid sequence, 240 residues long: T4 protein (240 aa).

This sequence belongs to the poxviruses B9 family.

The polypeptide is T4 protein (Sheeppox virus (strain KS-1) (SPPV)).